A 330-amino-acid chain; its full sequence is D-alanine--D-alanine ligase (330 aa).

Positions 121–321 constitute an ATP-grasp domain; that stretch reads NHYLKDFGVK…IKDVMTDIIE (201 aa). 149–204 contributes to the ATP binding site; sequence VTRLGLPIFVKPNDGGSSFGVTKVKEVSAIQPAIAKAFGEGREVILERFIDGTEVT. Residues D275, E288, and N290 each coordinate Mg(2+).

Belongs to the D-alanine--D-alanine ligase family. The cofactor is Mg(2+). Mn(2+) serves as cofactor.

Its subcellular location is the cytoplasm. It catalyses the reaction 2 D-alanine + ATP = D-alanyl-D-alanine + ADP + phosphate + H(+). Its pathway is cell wall biogenesis; peptidoglycan biosynthesis. In terms of biological role, cell wall formation. This chain is D-alanine--D-alanine ligase, found in Parabacteroides distasonis (strain ATCC 8503 / DSM 20701 / CIP 104284 / JCM 5825 / NCTC 11152).